Consider the following 236-residue polypeptide: tRNA (guanine-N(7)-)-methyltransferase (236 aa).

S-adenosyl-L-methionine-binding residues include Asp-35, Glu-60, Asn-87, and Asp-113. The active site involves Asp-113. Positions 117 and 149 each coordinate substrate.

This sequence belongs to the class I-like SAM-binding methyltransferase superfamily. TrmB family.

The catalysed reaction is guanosine(46) in tRNA + S-adenosyl-L-methionine = N(7)-methylguanosine(46) in tRNA + S-adenosyl-L-homocysteine. The protein operates within tRNA modification; N(7)-methylguanine-tRNA biosynthesis. Its function is as follows. Catalyzes the formation of N(7)-methylguanine at position 46 (m7G46) in tRNA. This chain is tRNA (guanine-N(7)-)-methyltransferase, found in Prochlorococcus marinus (strain MIT 9303).